Reading from the N-terminus, the 671-residue chain is cGMP-dependent protein kinase 1 (671 aa).

S2 is modified (N-acetylserine). A coiled-coil region spans residues 2-59 (SELEEDFAKILMLKEERIKELEKRLSEKEEEIQELKRKLHKCQSVLPVPSTHIGPRTT). Residues 2 to 102 (SELEEDFAKI…LIKEAILDND (101 aa)) are required for dimerization. The tract at residues 9–44 (AKILMLKEERIKELEKRLSEKEEEIQELKRKLHKCQ) is leucine-zipper. An autoinhibitory domain region spans residues 50–75 (PSTHIGPRTTRAQGISAEPQTYRSFH). The residue at position 59 (T59) is a Phosphothreonine; by autocatalysis. Residues 103-220 (FMKNLELSQI…EYMEFLKSVP (118 aa)) are cGMP-binding, high affinity. 3',5'-cyclic GMP contacts are provided by residues 167 to 170 (GELA), 177 to 178 (RT), R282, 291 to 294 (GEKA), 301 to 302 (RT), and Y336. Residues 221-341 (TFQSLPEEIL…SNKAYEDAEA (121 aa)) are cGMP-binding, low affinity. Positions 360–619 (FNIIDTLGVG…VKDIQKHKWF (260 aa)) constitute a Protein kinase domain. ATP contacts are provided by residues 366 to 374 (LGVGGFGRV) and K390. D484 serves as the catalytic Proton acceptor. The residue at position 515 (T515) is a Phosphothreonine. An AGC-kinase C-terminal domain is found at 620-671 (EGFNWEGLRKGTLTPPIIPSVASPTDTSNFDGFPEDNDEPPPDDNSGWDIDF). A disordered region spans residues 635–671 (PIIPSVASPTDTSNFDGFPEDNDEPPPDDNSGWDIDF). The segment covering 652–661 (FPEDNDEPPP) has biased composition (acidic residues).

This sequence belongs to the protein kinase superfamily. AGC Ser/Thr protein kinase family. cGMP subfamily. In terms of assembly, isoform alpha: parallel homodimer or heterodimer and also heterotetramer. Interacts directly with PPP1R12A. Non-covalent dimer of dimer of PRKG1-PRKG1 and PPP1R12A-PPP1R12A. This interaction targets PRKG1 to stress fibers to mediate smooth muscle cell relaxation and vasodilation in responses to rises in cGMP. Isoform beta: antiparallel homodimer. Part of cGMP kinase signaling complex at least composed of ACTA2/alpha-actin, CNN1/calponin H1, PLN/phospholamban, PRKG1 and ITPR1. Interacts with IRAG1. Forms a stable complex with ITPR1, IRAG1, and isoform beta of PRKG1. Interacts with TRPC7 (via ankyrin repeat domain). Isoform alpha interacts with RGS2. Interacts with GTF2I. Autophosphorylation increases kinase activity. Post-translationally, 65 kDa monomer is produced by proteolytic cleavage.

Its subcellular location is the cytoplasm. It carries out the reaction L-seryl-[protein] + ATP = O-phospho-L-seryl-[protein] + ADP + H(+). It catalyses the reaction L-threonyl-[protein] + ATP = O-phospho-L-threonyl-[protein] + ADP + H(+). With respect to regulation, in the absence of cGMP, PRKG1 activity is suppressed by autoinhibitory contacts. Serine/threonine protein kinase that acts as a key mediator of the nitric oxide (NO)/cGMP signaling pathway. GMP binding activates PRKG1, which phosphorylates serines and threonines on many cellular proteins. Numerous protein targets for PRKG1 phosphorylation are implicated in modulating cellular calcium, but the contribution of each of these targets may vary substantially among cell types. Proteins that are phosphorylated by PRKG1 regulate platelet activation and adhesion, smooth muscle contraction, cardiac function, gene expression, feedback of the NO-signaling pathway, and other processes involved in several aspects of the CNS like axon guidance, hippocampal and cerebellar learning, circadian rhythm and nociception. Smooth muscle relaxation is mediated through lowering of intracellular free calcium, by desensitization of contractile proteins to calcium, and by decrease in the contractile state of smooth muscle or in platelet activation. Regulates intracellular calcium levels via several pathways: phosphorylates IRAG1 and inhibits IP3-induced Ca(2+) release from intracellular stores, phosphorylation of KCNMA1 (BKCa) channels decreases intracellular Ca(2+) levels, which leads to increased opening of this channel. PRKG1 phosphorylates the canonical transient receptor potential channel (TRPC) family which inactivates the associated inward calcium current. Another mode of action of NO/cGMP/PKGI signaling involves PKGI-mediated inactivation of the Ras homolog gene family member A (RhoA). Phosphorylation of RHOA by PRKG1 blocks the action of this protein in myriad processes: regulation of RHOA translocation; decreasing contraction; controlling vesicle trafficking, reduction of myosin light chain phosphorylation resulting in vasorelaxation. Activation of PRKG1 by NO signaling also alters gene expression in a number of tissues. In smooth muscle cells, increased cGMP and PRKG1 activity influence expression of smooth muscle-specific contractile proteins, levels of proteins in the NO/cGMP signaling pathway, down-regulation of the matrix proteins osteopontin and thrombospondin-1 to limit smooth muscle cell migration and phenotype. Regulates vasodilator-stimulated phosphoprotein (VASP) functions in platelets and smooth muscle. The polypeptide is cGMP-dependent protein kinase 1 (PRKG1) (Oryctolagus cuniculus (Rabbit)).